The following is a 114-amino-acid chain: C-X-C motif chemokine 5 (114 aa).

The first 36 residues, 1 to 36 (MSLLSSRAARVPGPSSSLCALLVLLLLLTQPGPIAS), serve as a signal peptide directing secretion. Cystine bridges form between C49/C75 and C51/C91.

This sequence belongs to the intercrine alpha (chemokine CxC) family. In terms of assembly, monomer. Homodimer. Post-translationally, N-terminal processed forms ENA-78(8-78) and ENA-78(9-78) are produced by proteolytic cleavage after secretion from peripheral blood monocytes.

The protein resides in the secreted. Functionally, involved in neutrophil activation. In vitro, ENA-78(8-78) and ENA-78(9-78) show a threefold higher chemotactic activity for neutrophil granulocytes. This Homo sapiens (Human) protein is C-X-C motif chemokine 5 (CXCL5).